The following is a 468-amino-acid chain: Methylenetetrahydrofolate--tRNA-(uracil-5-)-methyltransferase TrmFO (468 aa).

10-15 is an FAD binding site; the sequence is GGGLAG.

It belongs to the MnmG family. TrmFO subfamily. Requires FAD as cofactor.

Its subcellular location is the cytoplasm. It catalyses the reaction uridine(54) in tRNA + (6R)-5,10-methylene-5,6,7,8-tetrahydrofolate + NADH + H(+) = 5-methyluridine(54) in tRNA + (6S)-5,6,7,8-tetrahydrofolate + NAD(+). It carries out the reaction uridine(54) in tRNA + (6R)-5,10-methylene-5,6,7,8-tetrahydrofolate + NADPH + H(+) = 5-methyluridine(54) in tRNA + (6S)-5,6,7,8-tetrahydrofolate + NADP(+). Functionally, catalyzes the folate-dependent formation of 5-methyl-uridine at position 54 (M-5-U54) in all tRNAs. The chain is Methylenetetrahydrofolate--tRNA-(uracil-5-)-methyltransferase TrmFO from Chelativorans sp. (strain BNC1).